We begin with the raw amino-acid sequence, 307 residues long: Elongation factor Ts (307 aa).

The involved in Mg(2+) ion dislocation from EF-Tu stretch occupies residues 80–83 (TDFV).

This sequence belongs to the EF-Ts family.

It localises to the cytoplasm. Functionally, associates with the EF-Tu.GDP complex and induces the exchange of GDP to GTP. It remains bound to the aminoacyl-tRNA.EF-Tu.GTP complex up to the GTP hydrolysis stage on the ribosome. This is Elongation factor Ts from Rhodospirillum centenum (strain ATCC 51521 / SW).